Reading from the N-terminus, the 430-residue chain is Phosphomethylpyrimidine synthase (430 aa).

Substrate is bound by residues Asn-68, Met-96, Tyr-125, His-164, 186 to 188, 227 to 230, and Glu-266; these read SRG and DALR. Residue His-270 participates in Zn(2+) binding. Tyr-293 is a binding site for substrate. A Zn(2+)-binding site is contributed by His-334. Residues Cys-410, Cys-413, and Cys-417 each coordinate [4Fe-4S] cluster.

Belongs to the ThiC family. The cofactor is [4Fe-4S] cluster.

It carries out the reaction 5-amino-1-(5-phospho-beta-D-ribosyl)imidazole + S-adenosyl-L-methionine = 4-amino-2-methyl-5-(phosphooxymethyl)pyrimidine + CO + 5'-deoxyadenosine + formate + L-methionine + 3 H(+). The protein operates within cofactor biosynthesis; thiamine diphosphate biosynthesis. In terms of biological role, catalyzes the synthesis of the hydroxymethylpyrimidine phosphate (HMP-P) moiety of thiamine from aminoimidazole ribotide (AIR) in a radical S-adenosyl-L-methionine (SAM)-dependent reaction. This is Phosphomethylpyrimidine synthase from Pyrobaculum aerophilum (strain ATCC 51768 / DSM 7523 / JCM 9630 / CIP 104966 / NBRC 100827 / IM2).